The sequence spans 428 residues: 3-phosphoshikimate 1-carboxyvinyltransferase (428 aa).

The 3-phosphoshikimate site is built by Lys22, Ser23, and Arg27. A phosphoenolpyruvate-binding site is contributed by Lys22. Residues Gly94 and Arg122 each contribute to the phosphoenolpyruvate site. Ser169, Ser170, Gln171, Ser197, Asp315, and Lys342 together coordinate 3-phosphoshikimate. Position 171 (Gln171) interacts with phosphoenolpyruvate. Asp315 acts as the Proton acceptor in catalysis. Residues Arg346, Arg389, and Lys414 each coordinate phosphoenolpyruvate.

It belongs to the EPSP synthase family. In terms of assembly, monomer.

The protein resides in the cytoplasm. The enzyme catalyses 3-phosphoshikimate + phosphoenolpyruvate = 5-O-(1-carboxyvinyl)-3-phosphoshikimate + phosphate. It functions in the pathway metabolic intermediate biosynthesis; chorismate biosynthesis; chorismate from D-erythrose 4-phosphate and phosphoenolpyruvate: step 6/7. In terms of biological role, catalyzes the transfer of the enolpyruvyl moiety of phosphoenolpyruvate (PEP) to the 5-hydroxyl of shikimate-3-phosphate (S3P) to produce enolpyruvyl shikimate-3-phosphate and inorganic phosphate. The protein is 3-phosphoshikimate 1-carboxyvinyltransferase of Cellvibrio japonicus (strain Ueda107) (Pseudomonas fluorescens subsp. cellulosa).